A 373-amino-acid chain; its full sequence is Spermidine/putrescine import ATP-binding protein PotA (373 aa).

Residues 8–238 form the ABC transporter domain; it reads FELRGVSKYF…PANLYVARFV (231 aa). Position 40-47 (40-47) interacts with ATP; it reads GPSGCGKT.

Belongs to the ABC transporter superfamily. Spermidine/putrescine importer (TC 3.A.1.11.1) family. In terms of assembly, the complex is composed of two ATP-binding proteins (PotA), two transmembrane proteins (PotB and PotC) and a solute-binding protein (PotD).

Its subcellular location is the cell inner membrane. The catalysed reaction is ATP + H2O + polyamine-[polyamine-binding protein]Side 1 = ADP + phosphate + polyamineSide 2 + [polyamine-binding protein]Side 1.. Its function is as follows. Part of the ABC transporter complex PotABCD involved in spermidine/putrescine import. Responsible for energy coupling to the transport system. This Oleidesulfovibrio alaskensis (strain ATCC BAA-1058 / DSM 17464 / G20) (Desulfovibrio alaskensis) protein is Spermidine/putrescine import ATP-binding protein PotA.